We begin with the raw amino-acid sequence, 410 residues long: Metacaspase-1 (410 aa).

The segment at 1-94 is disordered; that stretch reads MFPGSGRQTY…RQSGAMNDVS (94 aa). Low complexity-rich tracts occupy residues 21 to 47 and 55 to 64; these read APQYNYGPPQGPPQGYYNGPPQGYNGP and NYNYGHYGPP. The span at 65-75 shows a compositional bias: gly residues; the sequence is QGQGQGYGQGG. The span at 80 to 94 shows a compositional bias: polar residues; sequence MYNNNRQSGAMNDVS. Residues histidine 200 and cysteine 256 contribute to the active site.

This sequence belongs to the peptidase C14B family.

Functionally, involved in cell death (apoptosis). This chain is Metacaspase-1 (MCA1), found in Meyerozyma guilliermondii (strain ATCC 6260 / CBS 566 / DSM 6381 / JCM 1539 / NBRC 10279 / NRRL Y-324) (Yeast).